The sequence spans 232 residues: Endonuclease V (232 aa).

Mg(2+)-binding residues include Asp43 and Asp109.

It belongs to the endonuclease V family. Mg(2+) serves as cofactor.

Its subcellular location is the cytoplasm. It carries out the reaction Endonucleolytic cleavage at apurinic or apyrimidinic sites to products with a 5'-phosphate.. Its function is as follows. DNA repair enzyme involved in the repair of deaminated bases. Selectively cleaves double-stranded DNA at the second phosphodiester bond 3' to a deoxyinosine leaving behind the intact lesion on the nicked DNA. This chain is Endonuclease V, found in Thermofilum pendens (strain DSM 2475 / Hrk 5).